The following is a 414-amino-acid chain: Arrestin domain-containing protein 3 (414 aa).

2 short sequence motifs (PPxY motif) span residues 346–349 and 391–394; these read PPSY and PPLY. Positions 393–414 are disordered; that stretch reads LYSEIDPNPDQPADDRPSCPSR. A compositionally biased stretch (basic and acidic residues) spans 405 to 414; the sequence is ADDRPSCPSR.

This sequence belongs to the arrestin family. In terms of assembly, interacts (via PPxY motifs) with NEDD4 (via WW domains). Interacts with ADRB2. Interacts with ADRB3. Interacts with HGS (via PPxY motifs). Does not bind TXN (thioredoxin). Interacts with ITCH.

Its subcellular location is the cytoplasm. It is found in the cell membrane. It localises to the lysosome. The protein resides in the endosome. The protein localises to the early endosome. In terms of biological role, adapter protein that plays a role in regulating cell-surface expression of adrenergic receptors and probably also other G protein-coupled receptors. Plays a role in NEDD4-mediated ubiquitination and endocytosis af activated ADRB2 and subsequent ADRB2 degradation. May recruit NEDD4 to ADRB2. Alternatively, may function as adapter protein that does not play a major role in recruiting NEDD4 to ADRB2, but rather plays a role in a targeting ADRB2 to endosomes. This Bos taurus (Bovine) protein is Arrestin domain-containing protein 3 (ARRDC3).